A 537-amino-acid polypeptide reads, in one-letter code: Putative cysteine ligase BshC (537 aa).

The stretch at 422 to 450 (IEKVEGMIEQQRRLNKDLLDEVAGNQNNI) forms a coiled coil.

It belongs to the BshC family.

Involved in bacillithiol (BSH) biosynthesis. May catalyze the last step of the pathway, the addition of cysteine to glucosamine malate (GlcN-Mal) to generate BSH. This Staphylococcus aureus (strain Mu3 / ATCC 700698) protein is Putative cysteine ligase BshC.